Consider the following 67-residue polypeptide: UPF0437 protein y4xE (67 aa).

Belongs to the UPF0437 family.

The sequence is that of UPF0437 protein y4xE from Sinorhizobium fredii (strain NBRC 101917 / NGR234).